The following is a 260-amino-acid chain: NH(3)-dependent NAD(+) synthetase (260 aa).

31–38 (GLSGGLDS) serves as a coordination point for ATP. Asp37 provides a ligand contact to Mg(2+). Residue Arg112 coordinates deamido-NAD(+). Residue Thr132 coordinates ATP. Glu137 is a Mg(2+) binding site. Positions 161 and 183 each coordinate ATP.

Belongs to the NAD synthetase family. As to quaternary structure, homodimer.

It catalyses the reaction deamido-NAD(+) + NH4(+) + ATP = AMP + diphosphate + NAD(+) + H(+). The protein operates within cofactor biosynthesis; NAD(+) biosynthesis; NAD(+) from deamido-NAD(+) (ammonia route): step 1/1. Catalyzes the ATP-dependent amidation of deamido-NAD to form NAD. Uses ammonia as a nitrogen source. The polypeptide is NH(3)-dependent NAD(+) synthetase (Helicobacter pylori (strain ATCC 700392 / 26695) (Campylobacter pylori)).